Reading from the N-terminus, the 305-residue chain is UDP-3-O-acyl-N-acetylglucosamine deacetylase (305 aa).

H78, H237, and D241 together coordinate Zn(2+). H264 acts as the Proton donor in catalysis.

Belongs to the LpxC family. Requires Zn(2+) as cofactor.

The catalysed reaction is a UDP-3-O-[(3R)-3-hydroxyacyl]-N-acetyl-alpha-D-glucosamine + H2O = a UDP-3-O-[(3R)-3-hydroxyacyl]-alpha-D-glucosamine + acetate. It participates in glycolipid biosynthesis; lipid IV(A) biosynthesis; lipid IV(A) from (3R)-3-hydroxytetradecanoyl-[acyl-carrier-protein] and UDP-N-acetyl-alpha-D-glucosamine: step 2/6. Its function is as follows. Catalyzes the hydrolysis of UDP-3-O-myristoyl-N-acetylglucosamine to form UDP-3-O-myristoylglucosamine and acetate, the committed step in lipid A biosynthesis. The chain is UDP-3-O-acyl-N-acetylglucosamine deacetylase from Dechloromonas aromatica (strain RCB).